The chain runs to 188 residues: Apolipophorin-3 (188 aa).

The first 17 residues, 1-17 (MVAKLFVLVACIALSHA), serve as a signal peptide directing secretion. A propeptide spanning residues 18–22 (AMVRR) is cleaved from the precursor.

Belongs to the insect apolipophorin-3 family. In terms of assembly, equilibrium between a soluble monomer and a bound lipoprotein form. Apolipophorin-3 associates with lipophorin during lipid loading until each particle contains 9 or 14 molecules of apolipophorin-3. As to expression, expressed in fat body and secreted in hemolymph. Also expressed in ovary and testis at lower levels.

It localises to the secreted. Its function is as follows. Assists in the loading of diacylglycerol, generated from triacylglycerol stores in the fat body through the action of adipokinetic hormone, into lipophorin, the hemolymph lipoprotein. It increases the lipid carrying capacity of lipophorin by covering the expanding hydrophobic surface resulting from diacylglycerol uptake. It thus plays a critical role in the transport of lipids during flight in several species of insects. The protein is Apolipophorin-3 of Spodoptera litura (Asian cotton leafworm).